A 408-amino-acid polypeptide reads, in one-letter code: Histidine--tRNA ligase (408 aa).

Belongs to the class-II aminoacyl-tRNA synthetase family. As to quaternary structure, homodimer.

It localises to the cytoplasm. It carries out the reaction tRNA(His) + L-histidine + ATP = L-histidyl-tRNA(His) + AMP + diphosphate + H(+). This Campylobacter concisus (strain 13826) protein is Histidine--tRNA ligase.